We begin with the raw amino-acid sequence, 468 residues long: Adenosylhomocysteinase (468 aa).

Residues Thr57, Asp132, and Glu194 each coordinate substrate. 195-197 lines the NAD(+) pocket; the sequence is TTT. The substrate site is built by Lys224 and Asp228. NAD(+) is bound by residues Asn229, 258-263, Glu281, Asn316, 337-339, and Asn382; these read GFGDVG and IGH.

It belongs to the adenosylhomocysteinase family. NAD(+) serves as cofactor.

Its subcellular location is the cytoplasm. It carries out the reaction S-adenosyl-L-homocysteine + H2O = L-homocysteine + adenosine. The protein operates within amino-acid biosynthesis; L-homocysteine biosynthesis; L-homocysteine from S-adenosyl-L-homocysteine: step 1/1. Its function is as follows. May play a key role in the regulation of the intracellular concentration of adenosylhomocysteine. This is Adenosylhomocysteinase from Methylobacterium nodulans (strain LMG 21967 / CNCM I-2342 / ORS 2060).